The chain runs to 253 residues: MLAKRIIPCLDVKDGRVVKGINFVNLKDAGDPVEIAERYNELGADELVFLDITASYEKRKIMIDVVKRTSEKVFIPLTVGGGISDIDDIREVLKAGADKVSINTQAVKQPTLIRQAALRFGSQCVVVAIDAKKRPDGTGYNVYINGGRINTGLDAVEWAKKVKDLGAGEILLTSMDKDGTKDGYDIELTRLISEAVSIPVIASGGAGKPEHFKEVFTQGKADAALAASVFHYGELDIKELKRYLKDEGIPVRL.

Catalysis depends on residues aspartate 11 and aspartate 130.

Belongs to the HisA/HisF family. Heterodimer of HisH and HisF.

It is found in the cytoplasm. The enzyme catalyses 5-[(5-phospho-1-deoxy-D-ribulos-1-ylimino)methylamino]-1-(5-phospho-beta-D-ribosyl)imidazole-4-carboxamide + L-glutamine = D-erythro-1-(imidazol-4-yl)glycerol 3-phosphate + 5-amino-1-(5-phospho-beta-D-ribosyl)imidazole-4-carboxamide + L-glutamate + H(+). It participates in amino-acid biosynthesis; L-histidine biosynthesis; L-histidine from 5-phospho-alpha-D-ribose 1-diphosphate: step 5/9. IGPS catalyzes the conversion of PRFAR and glutamine to IGP, AICAR and glutamate. The HisF subunit catalyzes the cyclization activity that produces IGP and AICAR from PRFAR using the ammonia provided by the HisH subunit. In Caldanaerobacter subterraneus subsp. tengcongensis (strain DSM 15242 / JCM 11007 / NBRC 100824 / MB4) (Thermoanaerobacter tengcongensis), this protein is Imidazole glycerol phosphate synthase subunit HisF.